We begin with the raw amino-acid sequence, 41 residues long: Photosystem I reaction center subunit IX (41 aa).

The helical transmembrane segment at 7–27 (YLSTAPVLATLWFGLLAGILI) threads the bilayer.

This sequence belongs to the PsaJ family.

It localises to the plastid. The protein localises to the chloroplast thylakoid membrane. Functionally, may help in the organization of the PsaE and PsaF subunits. In Chara vulgaris (Common stonewort), this protein is Photosystem I reaction center subunit IX.